Here is a 76-residue protein sequence, read N- to C-terminus: Protein sprouty homolog 1 (76 aa).

Positions 1–52 constitute an SPR domain; that stretch reads NPCSCSQSHCCSRYLCMGAMSLFLPCLLCYPPAKGCLKLCRGCYDRVNRPGC.

It belongs to the sprouty family. Brain and interlimb region.

It is found in the cytoplasm. The protein localises to the membrane. In terms of biological role, inhibits fibroblast growth factor (FGF)-induced retinal lens fiber differentiation. Inhibits TGFB-induced epithelial-to-mesenchymal transition in lens epithelial cells. This chain is Protein sprouty homolog 1 (SPRY1), found in Gallus gallus (Chicken).